Consider the following 102-residue polypeptide: Parathymosin (102 aa).

A disordered region spans residues 1–102; it reads MSEKSVEAAA…RQKTENGASA (102 aa). N-acetylserine is present on Ser-2. Ser-2 bears the Phosphoserine mark. Lys-4 carries the post-translational modification N6-acetyllysine. A phosphoserine mark is found at Ser-5 and Ser-13. A compositionally biased stretch (basic and acidic residues) spans 13-37; the sequence is SAKDLKEKKEKVEEKASRKERKKEV. At Lys-15 the chain carries N6-acetyllysine. Over residues 38–76 the composition is skewed to acidic residues; sequence VEEEENGAEEEEEETAEDGEEEDEGEEEDEEEEEEDDEG. Thr-52 is subject to Phosphothreonine. The residue at position 92 (Lys-92) is an N6-acetyllysine.

This sequence belongs to the pro/parathymosin family.

Functionally, parathymosin may mediate immune function by blocking the effect of prothymosin alpha which confers resistance to certain opportunistic infections. The protein is Parathymosin (PTMS) of Homo sapiens (Human).